The sequence spans 410 residues: Formyl-CoA:oxalate CoA-transferase (410 aa).

CoA contacts are provided by residues 18–19 (QS), 72–75 (LNTK), 96–98 (NFG), R104, and 136–139 (KAYE). D168 serves as the catalytic Nucleophile. The disordered stretch occupies residues 221–245 (PLAEYPNEDFGDEVPRSGNASGGGQ). Residue 243–245 (GGQ) coordinates substrate.

Belongs to the CoA-transferase III family. Frc subfamily. Homodimer.

The catalysed reaction is formyl-CoA + oxalate = oxalyl-CoA + formate. Its pathway is metabolic intermediate degradation; oxalate degradation; CO(2) and formate from oxalate: step 1/2. In terms of biological role, involved in the catabolism of oxalate and in the adapatation to low pH via the induction of the oxalate-dependent acid tolerance response (ATR). Catalyzes the transfer of the CoA moiety from formyl-CoA to oxalate. This chain is Formyl-CoA:oxalate CoA-transferase, found in Streptomyces coelicolor (strain ATCC BAA-471 / A3(2) / M145).